The chain runs to 128 residues: Small ribosomal subunit protein uS14m (128 aa).

This sequence belongs to the universal ribosomal protein uS14 family. As to quaternary structure, component of the mitochondrial small ribosomal subunit (mt-SSU). Mature mammalian 55S mitochondrial ribosomes consist of a small (28S) and a large (39S) subunit. The 28S small subunit contains a 12S ribosomal RNA (12S mt-rRNA) and 30 different proteins. The 39S large subunit contains a 16S rRNA (16S mt-rRNA), a copy of mitochondrial valine transfer RNA (mt-tRNA(Val)), which plays an integral structural role, and 52 different proteins. Interacts with LIAT1.

Its subcellular location is the mitochondrion. The chain is Small ribosomal subunit protein uS14m from Homo sapiens (Human).